Reading from the N-terminus, the 520-residue chain is Nonsense-mediated mRNA decay factor SMG9 (520 aa).

Residues 1-143 (MSESGHSQPG…KGEKEGQRPT (143 aa)) are disordered. S2 carries the N-acetylserine modification. Phosphoserine occurs at positions 2, 4, 7, 32, and 53. Over residues 36–53 (GRERDYIAPWERERRDGS) the composition is skewed to basic and acidic residues. 2 stretches are compositionally biased toward pro residues: residues 78 to 94 (QPPPSTAPAAPPAPAPL) and 122 to 133 (TAPPPPTAPAPP). At S451 the chain carries Phosphoserine.

The protein belongs to the SMG9 family. As to quaternary structure, self-associates to form homodimers and forms heterodimers with SMG8; these assembly forms may represent SMG1C intermediate forms. Component of the SMG1C complex composed of SMG1, SMG8 and SMG9. Interacts with DHX34; the interaction is RNA-independent. In terms of processing, phosphorylated by SMG1.

In terms of biological role, involved in nonsense-mediated decay (NMD) of mRNAs containing premature stop codons. Is recruited by release factors to stalled ribosomes together with SMG1 and SMG8 (forming the SMG1C protein kinase complex) and, in the SMG1C complex, is required for the efficient association between SMG1 and SMG8. Plays a role in brain, heart, and eye development. In Mus musculus (Mouse), this protein is Nonsense-mediated mRNA decay factor SMG9.